A 514-amino-acid chain; its full sequence is Nucleus accumbens-associated protein 1 (514 aa).

Positions 30-94 (CDVSVVVKGH…CYTGRLSMNM (65 aa)) constitute a BTB domain. Lysine 167 participates in a covalent cross-link: Glycyl lysine isopeptide (Lys-Gly) (interchain with G-Cter in SUMO1); alternate. Lysine 167 participates in a covalent cross-link: Glycyl lysine isopeptide (Lys-Gly) (interchain with G-Cter in SUMO2); alternate. Lysine 182 is covalently cross-linked (Glycyl lysine isopeptide (Lys-Gly) (interchain with G-Cter in SUMO2)). 2 disordered regions span residues 183–218 (RLWDSSQKEAGGSGGNNGSRKMAKFSTPDLAPNRMP) and 241–279 (GPSMSERTSPGTSSAYTSDSPSSYHNEEDEEEDAGEEGT). Position 187 is a phosphoserine (serine 187). Residues 242–251 (PSMSERTSPG) are compositionally biased toward polar residues. The residue at position 245 (serine 245) is a Phosphoserine; by PKC. Positions 252–264 (TSSAYTSDSPSSY) are enriched in low complexity. The segment covering 267-279 (EEDEEEDAGEEGT) has biased composition (acidic residues). Glycyl lysine isopeptide (Lys-Gly) (interchain with G-Cter in SUMO2) cross-links involve residues lysine 304, lysine 438, lysine 466, and lysine 485. Positions 360 to 457 (GTNVYITRAQ…DMCTNARRVV (98 aa)) constitute a BEN domain. Phosphoserine is present on residues serine 492 and serine 496.

In terms of assembly, homooligomer; mediated by the BTB domain. Both isoforms interact with HDAC3 and HDAC4. Interacts (via BTB domain) with CUL3, PSMD7 and RCOR1. Post-translationally, phosphorylated by protein kinase C (PKC). In terms of tissue distribution, highly expressed in the hippocampus, brain cortex, cerebellum and brainstem. Expressed in the nucleus accumbens, olfactory tubercle, the striatum, frontal and parietal cortex and ventral pallidum. Weakly expressed in the heart, liver, kidney, spleen, testis, and skeletal muscle. Isoform 2 is expressed in the brain and liver, less abundantly expressed in the brain than isoform 1.

Its subcellular location is the nucleus. The protein localises to the cytoplasm. Functionally, functions as a transcriptional repressor. Isoform 1 is a stronger transcriptional repressor than isoform 2. Seems to function as a transcriptional corepressor in neuronal cells through recruitment of HDAC3 and HDAC4. Contributes to tumor progression, and tumor cell proliferation and survival. This may be mediated at least in part through repressing transcriptional activity of GADD45GIP1. Required for recruiting the proteasome from the nucleus to the cytoplasm and dendritic spines. The chain is Nucleus accumbens-associated protein 1 (Nacc1) from Rattus norvegicus (Rat).